The primary structure comprises 124 residues: Large ribosomal subunit protein bL12 (124 aa).

This sequence belongs to the bacterial ribosomal protein bL12 family. Homodimer. Part of the ribosomal stalk of the 50S ribosomal subunit. Forms a multimeric L10(L12)X complex, where L10 forms an elongated spine to which 2 to 4 L12 dimers bind in a sequential fashion. Binds GTP-bound translation factors.

In terms of biological role, forms part of the ribosomal stalk which helps the ribosome interact with GTP-bound translation factors. Is thus essential for accurate translation. The protein is Large ribosomal subunit protein bL12 of Brucella abortus (strain S19).